We begin with the raw amino-acid sequence, 88 residues long: DNA-directed RNA polymerase subunit omega (88 aa).

The protein belongs to the RNA polymerase subunit omega family. The RNAP catalytic core consists of 2 alpha, 1 beta, 1 beta' and 1 omega subunit. When a sigma factor is associated with the core the holoenzyme is formed, which can initiate transcription.

It carries out the reaction RNA(n) + a ribonucleoside 5'-triphosphate = RNA(n+1) + diphosphate. Functionally, promotes RNA polymerase assembly. Latches the N- and C-terminal regions of the beta' subunit thereby facilitating its interaction with the beta and alpha subunits. This is DNA-directed RNA polymerase subunit omega from Thermobifida fusca (strain YX).